An 85-amino-acid polypeptide reads, in one-letter code: Small ribosomal subunit protein eS27 (85 aa).

The C4-type zinc finger occupies 38 to 60; sequence CHGCRTITTVFSHAQNVVICSSC.

It belongs to the eukaryotic ribosomal protein eS27 family. The cofactor is Zn(2+).

This is Small ribosomal subunit protein eS27 (rps27) from Dictyostelium discoideum (Social amoeba).